We begin with the raw amino-acid sequence, 464 residues long: MAVYNYDVVILGTGPAGEGAAMNASKYGRKLAVVDSRRVVGGNCTHLGTIPSKALRHSVKQIIEFNTNPMFRQIGEPRWFSFPDVLKSADRVISKQVASRTGYYARNRIDMFTGTASFVDERTVEVVTPSGAVERLVADQFVIATGSRPYRPSDINFNHPRVYDSDTILSLSHTPRRLIIYGAGVIGCEYASIFSGLGVLVDLIDTRDQLLSFLDDEISDALSYHLRNNNVLIRHNEEYERVEGLDNGVILHLKSGKKIKADALLWCNGRTGNTDKLGLENVGIKVNSRGQIEVDENYRTSVSNIFAAGDVIGWPSLASAAYDQGRSAAGNIVESDSWRFVNDVPTGIYTIPEISSIGKNESELTAAKIPYEVGKAFFKGMARAQISNEPVGMLKILFHRETLEILGVHCFGDQASEIVHIGQAIMNQPGELNTLKYFVNTTFNYPTMAEAYRVAAFDGLNRLF.

35-44 (DSRRVVGGNC) serves as a coordination point for FAD.

This sequence belongs to the class-I pyridine nucleotide-disulfide oxidoreductase family. It depends on FAD as a cofactor.

It is found in the cytoplasm. It catalyses the reaction NAD(+) + NADPH = NADH + NADP(+). Conversion of NADPH, generated by peripheral catabolic pathways, to NADH, which can enter the respiratory chain for energy generation. This is Soluble pyridine nucleotide transhydrogenase from Pseudomonas aeruginosa (strain LESB58).